We begin with the raw amino-acid sequence, 501 residues long: Nuclear receptor-binding protein 2 (501 aa).

Residues 1–33 (MAAPEPAPRRAREREREREDESEDESDILEESP) form a disordered region. A compositionally biased stretch (basic and acidic residues) spans 7 to 19 (APRRARERERERE). The span at 20–30 (DESEDESDILE) shows a compositional bias: acidic residues. Positions 38–306 (QKRREQVNQG…AHSLLFHRVL (269 aa)) constitute a Protein kinase domain. A phosphothreonine mark is found at threonine 409 and threonine 411.

This sequence belongs to the protein kinase superfamily. Ser/Thr protein kinase family.

It localises to the cytoplasm. May regulate apoptosis of neural progenitor cells during their differentiation. The sequence is that of Nuclear receptor-binding protein 2 from Homo sapiens (Human).